The chain runs to 153 residues: Putative pre-16S rRNA nuclease (153 aa).

This sequence belongs to the YqgF nuclease family.

It localises to the cytoplasm. In terms of biological role, could be a nuclease involved in processing of the 5'-end of pre-16S rRNA. The polypeptide is Putative pre-16S rRNA nuclease (Prochlorococcus marinus (strain SARG / CCMP1375 / SS120)).